The following is a 251-amino-acid chain: METVQSIITEWTDPKSWEKLVQHSFKDSNWKELIDPVNYKFNFGVTPFSQFQIIPIVLVIYLVTIFSIKFLMKNRKPFSLKFISILHNAILCIWSLIMCVGVLYEIIKRVSNEGPLFTVCEDPNGGFDKGVTYYWSYIFYISKFYELLDTVIIVLKKKPLIFLHVYHHCKTVWWKKYITMIQILQFVCLGIAGVLHVYTINTIGCFTHYPAFAAAYSINFSFLFLFSKFFVKSYTPKNSNSNTNIKSKKID.

The next 5 membrane-spanning stretches (helical) occupy residues 51–71, 82–102, 135–155, 177–197, and 211–231; these read FQII…IKFL, FISI…CVGV, WSYI…IIVL, YITM…VLHV, and AFAA…KFFV.

It belongs to the ELO family.

The protein localises to the membrane. The catalysed reaction is a very-long-chain acyl-CoA + malonyl-CoA + H(+) = a very-long-chain 3-oxoacyl-CoA + CO2 + CoA. Its function is as follows. Could be implicated in synthesis of very long chain fatty acids. The polypeptide is Putative fatty acid elongase DDB_G0274669 (Dictyostelium discoideum (Social amoeba)).